Consider the following 295-residue polypeptide: ATP synthase gamma chain (295 aa).

Belongs to the ATPase gamma chain family. As to quaternary structure, F-type ATPases have 2 components, CF(1) - the catalytic core - and CF(0) - the membrane proton channel. CF(1) has five subunits: alpha(3), beta(3), gamma(1), delta(1), epsilon(1). CF(0) has three main subunits: a, b and c.

It localises to the cell inner membrane. In terms of biological role, produces ATP from ADP in the presence of a proton gradient across the membrane. The gamma chain is believed to be important in regulating ATPase activity and the flow of protons through the CF(0) complex. The polypeptide is ATP synthase gamma chain (Paraburkholderia phymatum (strain DSM 17167 / CIP 108236 / LMG 21445 / STM815) (Burkholderia phymatum)).